A 484-amino-acid chain; its full sequence is tRNA sulfurtransferase (484 aa).

Positions 63–167 (ELFAERLAHI…RDKLYMVSQR (105 aa)) constitute a THUMP domain. Residues 185–186 (LI), Lys267, Gly289, and Gln298 contribute to the ATP site. Residues Cys346 and Cys458 are joined by a disulfide bond. One can recognise a Rhodanese domain in the interval 406–484 (AAGNEVIIDI…GYNNVKVYRP (79 aa)). Catalysis depends on Cys458, which acts as the Cysteine persulfide intermediate.

This sequence belongs to the ThiI family.

The protein resides in the cytoplasm. The catalysed reaction is [ThiI sulfur-carrier protein]-S-sulfanyl-L-cysteine + a uridine in tRNA + 2 reduced [2Fe-2S]-[ferredoxin] + ATP + H(+) = [ThiI sulfur-carrier protein]-L-cysteine + a 4-thiouridine in tRNA + 2 oxidized [2Fe-2S]-[ferredoxin] + AMP + diphosphate. The enzyme catalyses [ThiS sulfur-carrier protein]-C-terminal Gly-Gly-AMP + S-sulfanyl-L-cysteinyl-[cysteine desulfurase] + AH2 = [ThiS sulfur-carrier protein]-C-terminal-Gly-aminoethanethioate + L-cysteinyl-[cysteine desulfurase] + A + AMP + 2 H(+). The protein operates within cofactor biosynthesis; thiamine diphosphate biosynthesis. Catalyzes the ATP-dependent transfer of a sulfur to tRNA to produce 4-thiouridine in position 8 of tRNAs, which functions as a near-UV photosensor. Also catalyzes the transfer of sulfur to the sulfur carrier protein ThiS, forming ThiS-thiocarboxylate. This is a step in the synthesis of thiazole, in the thiamine biosynthesis pathway. The sulfur is donated as persulfide by IscS. This chain is tRNA sulfurtransferase, found in Shewanella amazonensis (strain ATCC BAA-1098 / SB2B).